The sequence spans 337 residues: Inositol 2-dehydrogenase (337 aa).

Belongs to the Gfo/Idh/MocA family. Homotetramer.

It catalyses the reaction myo-inositol + NAD(+) = scyllo-inosose + NADH + H(+). Its function is as follows. Involved in the oxidation of myo-inositol (MI) to 2-keto-myo-inositol (2KMI or 2-inosose). In Klebsiella pneumoniae subsp. pneumoniae (strain ATCC 700721 / MGH 78578), this protein is Inositol 2-dehydrogenase.